Consider the following 135-residue polypeptide: Cytochrome c oxidase subunit 2 (135 aa).

4 residues coordinate Cu cation: H81, C116, C120, and H124.

Belongs to the cytochrome c oxidase subunit 2 family.

Its subcellular location is the cell membrane. It catalyses the reaction 4 Fe(II)-[cytochrome c] + O2 + 8 H(+)(in) = 4 Fe(III)-[cytochrome c] + 2 H2O + 4 H(+)(out). Subunits I and II form the functional core of the enzyme complex. Electrons originating in cytochrome c are transferred via heme a and Cu(A) to the binuclear center formed by heme a3 and Cu(B). This chain is Cytochrome c oxidase subunit 2 (cbaB), found in Thermus thermophilus.